Here is a 637-residue protein sequence, read N- to C-terminus: MSQQETHGFQTEVKQLLHLMIHSLYSNKEIFLRELVSNAADAADKLRYLALTNDALYEGDGELRVRISADKEKGTVTIEDNGVGMTRDGVIEHLGTIAKSGTAEFFKNLSGEASKDSQLIGQFGVGFYSAFIVAKKVTVRTRAAGHKANEAVLWESEGEGSFTVETITKATRGTEITLHLRDDEKEFADDWRLRSIITKYSDHISIPVEMWQEGTPERDGPDGEKIPATEGYWKAMNKATALWMRNKSEITDEEYQEFYKHISHDYTDALLWSHNRVEGKQEYTNLLYIPSKAPWDLWNRDRKHGLKLFVQRVFIMDDAEQFMPSYLRFVQGLIDSNDLPLNVSREILQDNHITKAMRTGITKRVLGMLEKLAKDDAEKYQQFWAEFGQVLKEGPAEDFANRERIAGLLRFASTHTGSAAPTVSLDDYISRMKEGQTKIYYIVADSHEAAANSPHLELLRKKGIEVLLMSERIDEWLINHLTEYKEKQLHSVTRGELELGELEDAAEKEAQEKLAEESAPLIERIKAALGASVADVKVTSRLTDTPACVVTGEGEMSTQMIKLMQAAGQPVPEVKPTFEVNPAHPLVSRLNDLQDEAAFADWSNLLLQQAQLSEKGSLADPSAFIKLMNQMLLANLK.

The a; substrate-binding stretch occupies residues 1-345; that stretch reads MSQQETHGFQ…SNDLPLNVSR (345 aa). The segment at 346 to 562 is b; sequence EILQDNHITK…EGEMSTQMIK (217 aa). The segment at 563–637 is c; the sequence is LMQAAGQPVP…MNQMLLANLK (75 aa).

The protein belongs to the heat shock protein 90 family. Homodimer.

The protein localises to the cytoplasm. Functionally, molecular chaperone. Has ATPase activity. The protein is Chaperone protein HtpG of Shewanella oneidensis (strain ATCC 700550 / JCM 31522 / CIP 106686 / LMG 19005 / NCIMB 14063 / MR-1).